A 616-amino-acid polypeptide reads, in one-letter code: Homeodomain-interacting protein kinase 4 (616 aa).

The region spanning 11 to 347 is the Protein kinase domain; it reads YDIIEVLGKG…PSAALRHPFV (337 aa). ATP contacts are provided by residues 17–25 and lysine 40; that span reads LGKGTFGEV. Residue aspartate 136 is the Proton acceptor of the active site. Residues 487–616 form a disordered region; the sequence is HKARKAPAGS…SFLQHVGGHH (130 aa). Residues 497-512 show a composition bias toward polar residues; that stretch reads KSDSNFSNLIRLSQAS. Serine 512 carries the post-translational modification Phosphoserine. The segment covering 542–560 has biased composition (basic and acidic residues); sequence REGDGPSIKDRPMDAERSG.

This sequence belongs to the protein kinase superfamily. CMGC Ser/Thr protein kinase family. HIPK subfamily. Autophosphorylated.

It localises to the cytoplasm. It carries out the reaction L-seryl-[protein] + ATP = O-phospho-L-seryl-[protein] + ADP + H(+). The catalysed reaction is L-threonyl-[protein] + ATP = O-phospho-L-threonyl-[protein] + ADP + H(+). Functionally, protein kinase that phosphorylates TP53, and thus induces TP53 repression of BIRC5 promoter. May act as a corepressor of transcription factors (Potential). In Rattus norvegicus (Rat), this protein is Homeodomain-interacting protein kinase 4 (Hipk4).